The primary structure comprises 694 residues: Putative ankyrin repeat protein RBE_0921 (694 aa).

ANK repeat units lie at residues L122–V151, N155–S185, F216–A245, T249–A275, L279–A317, Y321–K350, N351–D382, N384–K413, Q423–A452, and D456–I485.

The chain is Putative ankyrin repeat protein RBE_0921 from Rickettsia bellii (strain RML369-C).